Here is a 367-residue protein sequence, read N- to C-terminus: UDP-N-acetylglucosamine--N-acetylmuramyl-(pentapeptide) pyrophosphoryl-undecaprenol N-acetylglucosamine transferase (367 aa).

UDP-N-acetyl-alpha-D-glucosamine is bound by residues 15–17 (TGG), asparagine 127, arginine 163, serine 191, isoleucine 249, and glutamine 294.

It belongs to the glycosyltransferase 28 family. MurG subfamily.

Its subcellular location is the cell inner membrane. The catalysed reaction is di-trans,octa-cis-undecaprenyl diphospho-N-acetyl-alpha-D-muramoyl-L-alanyl-D-glutamyl-meso-2,6-diaminopimeloyl-D-alanyl-D-alanine + UDP-N-acetyl-alpha-D-glucosamine = di-trans,octa-cis-undecaprenyl diphospho-[N-acetyl-alpha-D-glucosaminyl-(1-&gt;4)]-N-acetyl-alpha-D-muramoyl-L-alanyl-D-glutamyl-meso-2,6-diaminopimeloyl-D-alanyl-D-alanine + UDP + H(+). Its pathway is cell wall biogenesis; peptidoglycan biosynthesis. Functionally, cell wall formation. Catalyzes the transfer of a GlcNAc subunit on undecaprenyl-pyrophosphoryl-MurNAc-pentapeptide (lipid intermediate I) to form undecaprenyl-pyrophosphoryl-MurNAc-(pentapeptide)GlcNAc (lipid intermediate II). The sequence is that of UDP-N-acetylglucosamine--N-acetylmuramyl-(pentapeptide) pyrophosphoryl-undecaprenol N-acetylglucosamine transferase from Burkholderia pseudomallei (strain 1710b).